The sequence spans 433 residues: Protein CLP1 homolog (433 aa).

ATP is bound by residues Glu-22, Arg-61, and 128-133 (DVGKTT).

The protein belongs to the Clp1 family. Clp1 subfamily.

It is found in the nucleus. Required for endonucleolytic cleavage during polyadenylation-dependent pre-mRNA 3'-end formation. This is Protein CLP1 homolog from Brugia malayi (Filarial nematode worm).